The chain runs to 325 residues: Ferrochelatase (325 aa).

Fe cation-binding residues include His195 and Glu276.

Belongs to the ferrochelatase family.

It is found in the cytoplasm. The enzyme catalyses heme b + 2 H(+) = protoporphyrin IX + Fe(2+). It participates in porphyrin-containing compound metabolism; protoheme biosynthesis; protoheme from protoporphyrin-IX: step 1/1. Functionally, catalyzes the ferrous insertion into protoporphyrin IX. This is Ferrochelatase from Methylococcus capsulatus (strain ATCC 33009 / NCIMB 11132 / Bath).